A 127-amino-acid chain; its full sequence is DNA-directed RNA polymerases I, II, and III subunit RPABC2 (127 aa).

Positions 1-32 are enriched in acidic residues; sequence MSDNEDNFDGDDFDDVEEDEGLDDLENAEEEG. Residues 1–52 are disordered; the sequence is MSDNEDNFDGDDFDDVEEDEGLDDLENAEEEGQVNVEILPSGERPQANQKRI. Ser2 carries the N-acetylserine modification. Ser2 bears the Phosphoserine; by CK2 mark.

The protein belongs to the archaeal Rpo6/eukaryotic RPB6 RNA polymerase subunit family. Component of the RNA polymerase I (Pol I), RNA polymerase II (Pol II) and RNA polymerase III (Pol III) complexes consisting of at least 13, 12 and 17 subunits, respectively. Pol I complex consists of a ten-subunit catalytic core composed of POLR1A/RPA1, POLR1B/RPA2, POLR1C/RPAC1, POLR1D/RPAC2, POLR1H/RPA12, POLR2E/RPABC1, POLR2F/RPABC2, POLR2H/RPABC3, POLR2K/RPABC4 and POLR2L/RPABC5; a mobile stalk subunit POLR1F/RPA43 protruding from the core and additional subunits homologous to general transcription factors POLR1E/RPA49 and POLR1G/RPA34. Part of Pol I pre-initiation complex (PIC), in which Pol I core assembles with RRN3 and promoter-bound UTBF and SL1/TIF-IB complex. Pol II complex contains a ten-subunit catalytic core composed of POLR2A/RPB1, POLR2B/RPB2, POLR2C/RPB3, POLR2I/RPB9, POLR2J/RPB11, POLR2E/RPABC1, POLR2F/RPABC2, POLR2H/RPABC3, POLR2K/RPABC4 and POLR2L/RPABC5 and a mobile stalk composed of two subunits POLR2D/RPB4 and POLR2G/RPB7. Part of Pol II(G) complex, in which Pol II core associates with an additional subunit POLR2M; unlike conventional Pol II, Pol II(G) functions as a transcriptional repressor. Part of TBP-based Pol II pre-initiation complex (PIC), in which Pol II core assembles with general transcription factors and other specific initiation factors including GTF2E1, GTF2E2, GTF2F1, GTF2F2, TCEA1, ERCC2, ERCC3, GTF2H2, GTF2H3, GTF2H4, GTF2H5, GTF2A1, GTF2A2, GTF2B and TBP; this large multi-subunit PIC complex mediates DNA unwinding and targets Pol II core to the transcription start site where the first phosphodiester bond forms. Pol III complex consists of a ten-subunit catalytic core composed of POLR3A/RPC1, POLR3B/RPC2, POLR1C/RPAC1, POLR1D/RPAC2, POLR3K/RPC10, POLR2E/RPABC1, POLR2F/RPABC2, POLR2H/RPABC3, POLR2K/RPABC4 and POLR2L/RPABC5; a mobile stalk composed of two subunits POLR3H/RPC8 and CRCP/RPC9, protruding from the core and functioning primarily in transcription initiation; and additional subunits homologous to general transcription factors of the RNA polymerase II machinery, POLR3C/RPC3-POLR3F/RPC6-POLR3G/RPC7 heterotrimer required for transcription initiation and POLR3D/RPC4-POLR3E/RPC5 heterodimer involved in both transcription initiation and termination.

The protein localises to the nucleus. It localises to the nucleolus. DNA-dependent RNA polymerase catalyzes the transcription of DNA into RNA using the four ribonucleoside triphosphates as substrates. Common component of RNA polymerases I, II, and III which synthesize ribosomal RNA precursors, mRNA precursors and many functional non-coding RNAs, and small RNAs, such as 5S rRNA and tRNAs, respectively. Pol II is the central component of the basal RNA polymerase II transcription machinery. Pols are composed of mobile elements that move relative to each other. In Pol II, POLR2F/RPABC2 is part of the clamp element and together with parts of POLR2A/RPB1 and POLR2B/RPB2 forms a pocket to which the POLR2D/RPB4-POLR2G/RPB7 subcomplex binds. The chain is DNA-directed RNA polymerases I, II, and III subunit RPABC2 (POLR2F) from Bos taurus (Bovine).